We begin with the raw amino-acid sequence, 217 residues long: MHRQSVARLTRQCHGLPLVELPPPYLAPSLHFSLIRTPVQCSSFSSTAVVAGRGRDLNKTRGVSAIHRTGPRFKLGVSKYPLPKPVSPAALEKREATPNHGLWGFFPRDRSALSTPEYDIAHGRSWSIQELREKSWEDLHCLWWVCVKERNRIATSNLERQRLKAGYGEWEARERDRTIRITQNGIKHVLRERWYAWEDAKRLYKKGYRPQDEENQE.

The protein belongs to the universal ribosomal protein uL29 family. In terms of assembly, component of the mitochondrial large ribosomal subunit. Mature mitochondrial ribosomes consist of a small (37S) and a large (54S) subunit. The 37S subunit contains at least 33 different proteins and 1 molecule of RNA (15S). The 54S subunit contains at least 45 different proteins and 1 molecule of RNA (21S).

The protein localises to the mitochondrion. The polypeptide is Large ribosomal subunit protein uL29m (mrpl4) (Aspergillus fumigatus (strain ATCC MYA-4609 / CBS 101355 / FGSC A1100 / Af293) (Neosartorya fumigata)).